The sequence spans 154 residues: Superoxide dismutase [Cu-Zn] (154 aa).

The Cu cation site is built by His47, His49, and His64. Cys58 and Cys147 are oxidised to a cystine. Residues His64, His72, His81, and Asp84 each coordinate Zn(2+). His121 is a binding site for Cu cation. The segment covering 125–137 (DDLGRGGNEESKK) has biased composition (basic and acidic residues). A disordered region spans residues 125–147 (DDLGRGGNEESKKTGNAGPRPAC). Arg144 serves as a coordination point for substrate.

The protein belongs to the Cu-Zn superoxide dismutase family. As to quaternary structure, homodimer. Cu cation serves as cofactor. It depends on Zn(2+) as a cofactor.

It is found in the cytoplasm. It carries out the reaction 2 superoxide + 2 H(+) = H2O2 + O2. In terms of biological role, destroys radicals which are normally produced within the cells and which are toxic to biological systems. In Aspergillus niger (strain ATCC MYA-4892 / CBS 513.88 / FGSC A1513), this protein is Superoxide dismutase [Cu-Zn].